We begin with the raw amino-acid sequence, 309 residues long: 4-hydroxy-3-methylbut-2-enyl diphosphate reductase (309 aa).

[4Fe-4S] cluster is bound at residue Cys-12. (2E)-4-hydroxy-3-methylbut-2-enyl diphosphate is bound by residues His-41 and His-74. Dimethylallyl diphosphate-binding residues include His-41 and His-74. His-41 and His-74 together coordinate isopentenyl diphosphate. A [4Fe-4S] cluster-binding site is contributed by Cys-96. His-124 is a binding site for (2E)-4-hydroxy-3-methylbut-2-enyl diphosphate. His-124 is a binding site for dimethylallyl diphosphate. His-124 contributes to the isopentenyl diphosphate binding site. Glu-126 (proton donor) is an active-site residue. (2E)-4-hydroxy-3-methylbut-2-enyl diphosphate is bound at residue Thr-167. [4Fe-4S] cluster is bound at residue Cys-197. (2E)-4-hydroxy-3-methylbut-2-enyl diphosphate-binding residues include Ser-225, Ser-226, Asn-227, and Ser-269. The dimethylallyl diphosphate site is built by Ser-225, Ser-226, Asn-227, and Ser-269. Residues Ser-225, Ser-226, Asn-227, and Ser-269 each coordinate isopentenyl diphosphate.

It belongs to the IspH family. It depends on [4Fe-4S] cluster as a cofactor.

The catalysed reaction is isopentenyl diphosphate + 2 oxidized [2Fe-2S]-[ferredoxin] + H2O = (2E)-4-hydroxy-3-methylbut-2-enyl diphosphate + 2 reduced [2Fe-2S]-[ferredoxin] + 2 H(+). It carries out the reaction dimethylallyl diphosphate + 2 oxidized [2Fe-2S]-[ferredoxin] + H2O = (2E)-4-hydroxy-3-methylbut-2-enyl diphosphate + 2 reduced [2Fe-2S]-[ferredoxin] + 2 H(+). It participates in isoprenoid biosynthesis; dimethylallyl diphosphate biosynthesis; dimethylallyl diphosphate from (2E)-4-hydroxy-3-methylbutenyl diphosphate: step 1/1. It functions in the pathway isoprenoid biosynthesis; isopentenyl diphosphate biosynthesis via DXP pathway; isopentenyl diphosphate from 1-deoxy-D-xylulose 5-phosphate: step 6/6. Functionally, catalyzes the conversion of 1-hydroxy-2-methyl-2-(E)-butenyl 4-diphosphate (HMBPP) into a mixture of isopentenyl diphosphate (IPP) and dimethylallyl diphosphate (DMAPP). Acts in the terminal step of the DOXP/MEP pathway for isoprenoid precursor biosynthesis. This is 4-hydroxy-3-methylbut-2-enyl diphosphate reductase from Shewanella pealeana (strain ATCC 700345 / ANG-SQ1).